Consider the following 402-residue polypeptide: Thyroid hormone receptor alpha (402 aa).

Positions 1-22 are disordered; that stretch reads MEQKPSTLDPLSEPEDTRWLDG. A modulating region spans residues 1 to 50; sequence MEQKPSTLDPLSEPEDTRWLDGKRKRKSSQCLVKSSMSGYIPSYLDKDEQ. Serine 12 is modified (phosphoserine; by CK2). Serine 28 carries the post-translational modification Phosphoserine. The Zn(2+) site is built by cysteine 51, cysteine 54, cysteine 68, cysteine 71, cysteine 89, cysteine 95, cysteine 105, and cysteine 108. NR C4-type zinc fingers lie at residues 51–71 and 89–113; these read CVVCGDKATGYHYRCITCEGC and CKYDGCCVIDKITRNQCQLCRFKKC. The nuclear receptor DNA-binding region spans 51-125; the sequence is CVVCGDKATG…VGMAMDLVLD (75 aa). The 242-residue stretch at 161-402 folds into the NR LBD domain; it reads EEWELIHVVT…ELFPPLFLEV (242 aa). The 3,3',5-triiodo-L-thyronine site is built by arginine 226 and serine 275.

Belongs to the nuclear hormone receptor family. NR1 subfamily. Probably interacts with SFPQ.

Its subcellular location is the nucleus. In terms of biological role, nuclear hormone receptor that can act as a repressor or activator of transcription. High affinity receptor for thyroid hormones, including triiodothyronine and thyroxine. The sequence is that of Thyroid hormone receptor alpha (THRA) from Aptenodytes patagonicus (King penguin).